The following is a 133-amino-acid chain: Ribonuclease VapC17 (133 aa).

Positions 7 and 93 each coordinate Mg(2+). A PINc domain is found at 30 to 118 (AICDIGELEW…HHDRDYKRIA (89 aa)).

It belongs to the PINc/VapC protein family. Mg(2+) serves as cofactor.

Functionally, toxic component of a type II toxin-antitoxin (TA) system. An RNase. The cognate antitoxin is VapB17. This is Ribonuclease VapC17 from Mycobacterium tuberculosis (strain CDC 1551 / Oshkosh).